Reading from the N-terminus, the 88-residue chain is DNA-directed RNA polymerase subunit omega (88 aa).

It belongs to the RNA polymerase subunit omega family. In terms of assembly, the RNAP catalytic core consists of 2 alpha, 1 beta, 1 beta' and 1 omega subunit. When a sigma factor is associated with the core the holoenzyme is formed, which can initiate transcription.

It catalyses the reaction RNA(n) + a ribonucleoside 5'-triphosphate = RNA(n+1) + diphosphate. Its function is as follows. Promotes RNA polymerase assembly. Latches the N- and C-terminal regions of the beta' subunit thereby facilitating its interaction with the beta and alpha subunits. This chain is DNA-directed RNA polymerase subunit omega, found in Clostridioides difficile (strain 630) (Peptoclostridium difficile).